The sequence spans 638 residues: DNA-directed RNA polymerase I subunit RPA1 (638 aa).

Positions 297–317 (EYDEEDDESSGESEVREGDEE) are enriched in acidic residues. Residues 297–321 (EYDEEDDESSGESEVREGDEEQEKK) are disordered.

This sequence belongs to the RNA polymerase beta' chain family. Each class of RNA polymerase is assembled from 9 to 14 different polypeptides. This subunit is the largest component of RNA polymerase I.

It is found in the nucleus. The catalysed reaction is RNA(n) + a ribonucleoside 5'-triphosphate = RNA(n+1) + diphosphate. DNA-dependent RNA polymerase catalyzes the transcription of DNA into RNA using the four ribonucleoside triphosphates as substrates. RNA polymerase I is essentially used to transcribe ribosomal DNA units. This is DNA-directed RNA polymerase I subunit RPA1 (RPA1) from Euplotoides octocarinatus (Freshwater ciliate).